A 198-amino-acid chain; its full sequence is Probable GTP-binding protein EngB (198 aa).

The region spanning 21–195 (NFSEVAFLGR…EDIIIDQTLG (175 aa)) is the EngB-type G domain. Residues 29 to 36 (GRSNVGKS), 56 to 60 (GKTQL), 81 to 84 (DLPG), 151 to 154 (TKCD), and 174 to 176 (VSN) contribute to the GTP site. Mg(2+) is bound by residues S36 and T58.

Belongs to the TRAFAC class TrmE-Era-EngA-EngB-Septin-like GTPase superfamily. EngB GTPase family. Mg(2+) serves as cofactor.

Its function is as follows. Necessary for normal cell division and for the maintenance of normal septation. This chain is Probable GTP-binding protein EngB, found in Campylobacter jejuni subsp. jejuni serotype O:6 (strain 81116 / NCTC 11828).